The following is a 166-amino-acid chain: UPF0178 protein BPUM_2255 (166 aa).

This sequence belongs to the UPF0178 family.

This Bacillus pumilus (strain SAFR-032) protein is UPF0178 protein BPUM_2255.